Here is a 471-residue protein sequence, read N- to C-terminus: Heat shock 70 kDa protein 13 (471 aa).

The first 22 residues, 1-22 (MAREMTILGSAVLTLLLAGYLA), serve as a signal peptide directing secretion. The span at 315–341 (EQDRKEPHSSDTELPKDKLSSADDHRV) shows a compositional bias: basic and acidic residues. A disordered region spans residues 315 to 352 (EQDRKEPHSSDTELPKDKLSSADDHRVNSGFGRGLSDK).

It belongs to the heat shock protein 70 family. Binds UBQLN2. Constitutively expressed in all tissues.

The protein resides in the microsome. It is found in the endoplasmic reticulum. In terms of biological role, has peptide-independent ATPase activity. In Homo sapiens (Human), this protein is Heat shock 70 kDa protein 13 (HSPA13).